Consider the following 252-residue polypeptide: 5-oxoprolinase subunit A (252 aa).

Belongs to the LamB/PxpA family. As to quaternary structure, forms a complex composed of PxpA, PxpB and PxpC.

The enzyme catalyses 5-oxo-L-proline + ATP + 2 H2O = L-glutamate + ADP + phosphate + H(+). Functionally, catalyzes the cleavage of 5-oxoproline to form L-glutamate coupled to the hydrolysis of ATP to ADP and inorganic phosphate. This Staphylococcus epidermidis (strain ATCC 35984 / DSM 28319 / BCRC 17069 / CCUG 31568 / BM 3577 / RP62A) protein is 5-oxoprolinase subunit A.